A 1140-amino-acid chain; its full sequence is MARYTQRPENALKRANEFIEVGKPLRALDTLQEVFRNKRWNYAYSETVIEPLMFKYLYLCVELKKSHIAKEGLFQYRNMFQLVNVNSLENVIRGYLKMAEEHTEAAQAQSSAAVAVLELDDLDNIATPESILMSAVCGEDAQDRSDRTILLPWVKFLWESYCQCLELLRVNTHCETLYHDIARMAFQFCLKYNRKSEFRRLCDKLRKHLEDICKSSNQTTGVSINKVETQQLCLDTRLYLLDSAIQMELWQEAYKAIEDIHGLMALSKKTPVPKTMANYYQKLAMVFSKAGNQLFHAAALLKLFQLTRELKKNLTKDDLQRMAAHVLLATLSIPLPSAHPEFDRFIEADKSPLEKAQKLAILLGLPQPPTRVSLIREVVRLNVPQLVSEDFRNLYNWLEVDFNPLNLCQRIQSVVDTIESGPAETSLLTPYIQSLKDVTIMRLIRQISQVYESIEFKRLLELASFCNVFELEKLLVESVRHNDMQIRIDHQKHCIYFGTDLTESQREYRPDGPTLQSMPSEQIRSQLVNMSTVLTRAVSIVYPDREREQRAKLRTQMVHHYHEIKDREHQRILQRQKIIEDRKEFIEKQNNAREEEEARRQEEESRKAKLAEQKRLEQEQEERERKRHQNEIQAIREKSLKEKVQQISQTAHGKKMLSKLDEEGIKKLDAEQIAKRENEELQREAKELQSKLKSQEKKIDYFERAKRLEEIPLFEKYLTEKQVKDKEFWEATEQTRIENAITERKDAVSQQERLKRMYPDRDEYLEALKKERASLYLEKVEKFEIALEVERKKRLADRVIRRREERRQAHLREKEEERLRKEEEIRMAQAAEERAAAEARRLEREAEDEKRRAQYEKQRAKEEEAERKIKEDRDRLAREVAVERERSDKERDTWRPRGDRPEGRPSAAAGGGGASEWRRPAPTADRADRDRGADRDRGADRDRGADRDRGADRERGADRDRKDNEAGGASDSWRVRREPDSQRNAAPKDGGGSSGGAQPSRDDKWRRGGDRERDRDFRNDGQGPRRGGDREDDRDRGGFRRNDGPRRNEEQQRETGGNWRDAPRQSDNRDNRRPAGGDRRDRDRDVRGAGPKEGGGGGGGNWRTAPAPRDEKPTTKQRDQPQDKENKAGDDGEWTSVKRR.

The PCI domain occupies 319–502 (LQRMAAHVLL…HCIYFGTDLT (184 aa)). Composition is skewed to basic and acidic residues over residues 590 to 624 (NNAREEEEARRQEEESRKAKLAEQKRLEQEQEERE), 826 to 903 (RMAQ…RPEG), 925 to 965 (DRAD…KDNE), 1000 to 1019 (SRDDKWRRGGDRERDRDFRN), 1026 to 1053 (RGGDREDDRDRGGFRRNDGPRRNEEQQR), and 1061 to 1087 (DAPRQSDNRDNRRPAGGDRRDRDRDVR). Disordered regions lie at residues 590–632 (NNAR…QNEI) and 826–1140 (RMAQ…VKRR). The segment covering 1091-1101 (PKEGGGGGGGN) has biased composition (gly residues). A compositionally biased stretch (basic and acidic residues) spans 1108 to 1130 (PRDEKPTTKQRDQPQDKENKAGD).

This sequence belongs to the eIF-3 subunit A family. In terms of assembly, component of the eukaryotic translation initiation factor 3 (eIF-3) complex. The eIF-3 complex interacts with pix.

The protein resides in the cytoplasm. In terms of biological role, RNA-binding component of the eukaryotic translation initiation factor 3 (eIF-3) complex, which is involved in protein synthesis of a specialized repertoire of mRNAs and, together with other initiation factors, stimulates binding of mRNA and methionyl-tRNAi to the 40S ribosome. The eIF-3 complex specifically targets and initiates translation of a subset of mRNAs involved in cell proliferation. This chain is Eukaryotic translation initiation factor 3 subunit A, found in Drosophila willistoni (Fruit fly).